The following is a 386-amino-acid chain: Succinate--CoA ligase [ADP-forming] subunit beta (386 aa).

Residues 9–244 form the ATP-grasp domain; sequence KELLRQYGVA…LDEEDPKEIE (236 aa). ATP contacts are provided by residues Lys46, 53–55, Glu99, Cys102, and Glu107; that span reads GRG. Positions 199 and 213 each coordinate Mg(2+). Residues Asn264 and 321 to 323 each bind substrate; that span reads GIM.

This sequence belongs to the succinate/malate CoA ligase beta subunit family. As to quaternary structure, heterotetramer of two alpha and two beta subunits. It depends on Mg(2+) as a cofactor.

It catalyses the reaction succinate + ATP + CoA = succinyl-CoA + ADP + phosphate. It carries out the reaction GTP + succinate + CoA = succinyl-CoA + GDP + phosphate. Its pathway is carbohydrate metabolism; tricarboxylic acid cycle; succinate from succinyl-CoA (ligase route): step 1/1. Its function is as follows. Succinyl-CoA synthetase functions in the citric acid cycle (TCA), coupling the hydrolysis of succinyl-CoA to the synthesis of either ATP or GTP and thus represents the only step of substrate-level phosphorylation in the TCA. The beta subunit provides nucleotide specificity of the enzyme and binds the substrate succinate, while the binding sites for coenzyme A and phosphate are found in the alpha subunit. This Halalkalibacterium halodurans (strain ATCC BAA-125 / DSM 18197 / FERM 7344 / JCM 9153 / C-125) (Bacillus halodurans) protein is Succinate--CoA ligase [ADP-forming] subunit beta.